The following is a 486-amino-acid chain: 2-hydroxymuconic semialdehyde dehydrogenase (486 aa).

Active-site residues include glutamate 254 and cysteine 288.

The protein belongs to the aldehyde dehydrogenase family. In terms of assembly, homodimer.

The enzyme catalyses (2Z,4E)-2-hydroxy-6-oxohexa-2,4-dienoate + NAD(+) + H2O = (2Z,4E)-2-hydroxyhexa-2,4-dienedioate + NADH + 2 H(+). The protein operates within aromatic compound metabolism; benzoate degradation via hydroxylation. Functionally, 2-hydroxymuconic acid semialdehyde can be converted to 2-hydroxypent-2,4-dienoate either directly by the action of 2-hydroxymuconic semialdehyde hydrolase (HMSH) or by the action of three sequential enzymes, the first of which is HMSD. Can oxidize not only 2-hydroxymuconic semialdehyde and its analogs but also benzaldehyde and its analogs. The chain is 2-hydroxymuconic semialdehyde dehydrogenase (xylG) from Pseudomonas putida (Arthrobacter siderocapsulatus).